The sequence spans 51 residues: Large ribosomal subunit protein eL39 (51 aa).

This sequence belongs to the eukaryotic ribosomal protein eL39 family.

The chain is Large ribosomal subunit protein eL39 (RpL39) from Drosophila melanogaster (Fruit fly).